Here is a 144-residue protein sequence, read N- to C-terminus: Large ribosomal subunit protein uL13 (144 aa).

It belongs to the universal ribosomal protein uL13 family. As to quaternary structure, part of the 50S ribosomal subunit.

In terms of biological role, this protein is one of the early assembly proteins of the 50S ribosomal subunit, although it is not seen to bind rRNA by itself. It is important during the early stages of 50S assembly. In Nitrosomonas europaea (strain ATCC 19718 / CIP 103999 / KCTC 2705 / NBRC 14298), this protein is Large ribosomal subunit protein uL13.